The chain runs to 102 residues: Large ribosomal subunit protein uL24 (102 aa).

Belongs to the universal ribosomal protein uL24 family. As to quaternary structure, part of the 50S ribosomal subunit.

Its function is as follows. One of two assembly initiator proteins, it binds directly to the 5'-end of the 23S rRNA, where it nucleates assembly of the 50S subunit. Functionally, one of the proteins that surrounds the polypeptide exit tunnel on the outside of the subunit. The chain is Large ribosomal subunit protein uL24 from Cupriavidus pinatubonensis (strain JMP 134 / LMG 1197) (Cupriavidus necator (strain JMP 134)).